The primary structure comprises 103 residues: Histone H4 (103 aa).

Lysine 6 carries the N6-acetyl-N6-methyllysine; alternate modification. N6-methyllysine; alternate is present on residues lysine 6, lysine 9, and lysine 13. Lysine 13 carries the post-translational modification N6-acetyl-N6-methyllysine; alternate. A DNA-binding region spans residues 17-21 (KRHRK). Residue lysine 92 is modified to N6-glutaryllysine.

This sequence belongs to the histone H4 family. In terms of assembly, the nucleosome is a histone octamer containing two molecules each of H2A, H2B, H3 and H4 assembled in one H3-H4 heterotetramer and two H2A-H2B heterodimers. The octamer wraps approximately 147 bp of DNA. In terms of processing, glutarylation at Lys-92 (H4K91glu) destabilizes nucleosomes by promoting dissociation of the H2A-H2B dimers from nucleosomes.

The protein localises to the nucleus. The protein resides in the chromosome. Core component of nucleosome. Nucleosomes wrap and compact DNA into chromatin, limiting DNA accessibility to the cellular machineries which require DNA as a template. Histones thereby play a central role in transcription regulation, DNA repair, DNA replication and chromosomal stability. DNA accessibility is regulated via a complex set of post-translational modifications of histones, also called histone code, and nucleosome remodeling. The protein is Histone H4 (ahsb4) of Blastobotrys adeninivorans (Yeast).